We begin with the raw amino-acid sequence, 358 residues long: DnaJ homolog subfamily C member 18 (358 aa).

The region spanning 82–146 (NYYEILGVSR…DKRLRYDEYG (65 aa)) is the J domain. The helical transmembrane segment at 228-248 (AFIQLLPVLVIVIISVITQLL) threads the bilayer.

It localises to the endoplasmic reticulum membrane. Functionally, (Microbial infection) In case of infection by polyomavirus, involved in the virus endoplasmic reticulum membrane penetration and infection. Regulates the recruitment of DNAJB12:DNAJB14 into SV40-induced foci and all cooperate to guide SV40 across the endoplasmic reticulum membrane. The foci represent the site from which SV40 penetrates into the cytosol. The sequence is that of DnaJ homolog subfamily C member 18 from Homo sapiens (Human).